A 167-amino-acid chain; its full sequence is uncharacterized protein (167 aa).

The N-acetyltransferase domain occupies 9–167 (PVMRRLTLQD…DCEVRMLREL (159 aa)).

The protein belongs to the acetyltransferase family.

This is an uncharacterized protein from Escherichia coli (strain K12).